Consider the following 534-residue polypeptide: Phenylalanine N-monooxygenase CYP79D16 (534 aa).

Residues 1 to 21 (MEANVGFLTLCLAITLVRFLM) form the signal peptide. C472 contacts heme. A glycan (N-linked (GlcNAc...) asparagine) is linked at N500.

It belongs to the cytochrome P450 family. Heme is required as a cofactor. As to expression, expressed in seedlings.

The catalysed reaction is L-phenylalanine + 2 reduced [NADPH--hemoprotein reductase] + 2 O2 = (E)-phenylacetaldehyde oxime + 2 oxidized [NADPH--hemoprotein reductase] + CO2 + 3 H2O + 2 H(+). Its function is as follows. Involved in L-phenylalanine-derived cyanogenic glycoside biosynthesis, including prunasin and amygdalin defensive agents. Catalyzes the conversion of L-phenylalanine (Phe) into phenylacetaldoxime (PAOx). Cannot use tyrosine (Tyr), tryptophan (Trp) and valine (Val) as substrates. This Prunus mume (Japanese apricot) protein is Phenylalanine N-monooxygenase CYP79D16.